The sequence spans 230 residues: MYDIKKWRHIFKLDPAKHISDDDLDAICMSQTDAIMIGGTDDVTEDNVIHLMSRVRRYPLPLVLEISNIESVMPGFDFYFVPTVLNSTDVVFHNGTLLEALKTYGHSIDFEEVIFEGYVVCNADSKMAKHTKANTDLTTEDLEAYAQMVNHMYRLPVMYIEYSGIYGDVSKVQAVSEHLTETQLFYGGGISSEQQATEMAAIADTIIVGDIIYKDIKKALKTVKIKESSK.

K12 is a sn-glycerol 1-phosphate binding site. Residues D14 and T40 each contribute to the Mg(2+) site. Residues 159 to 164 (YIEYSG), G189, and 209 to 210 (GD) contribute to the sn-glycerol 1-phosphate site.

The protein belongs to the GGGP/HepGP synthase family. Group I subfamily. Homodimer. Mg(2+) is required as a cofactor.

It carries out the reaction sn-glycerol 1-phosphate + all-trans-heptaprenyl diphosphate = 3-heptaprenyl-sn-glycero-1-phosphate + diphosphate. The protein operates within membrane lipid metabolism; glycerophospholipid metabolism. Its function is as follows. Prenyltransferase that catalyzes in vivo the transfer of the heptaprenyl moiety of heptaprenyl pyrophosphate (HepPP; 35 carbon atoms) to the C3 hydroxyl of sn-glycerol-1-phosphate (G1P), producing heptaprenylglyceryl phosphate (HepGP). This reaction is an ether-bond-formation step in the biosynthesis of archaea-type G1P-based membrane lipids found in Bacillales. The polypeptide is Heptaprenylglyceryl phosphate synthase (Staphylococcus aureus (strain USA300)).